The chain runs to 114 residues: Beta-microseminoprotein (114 aa).

An N-terminal signal peptide occupies residues 1–20 (MNVLLGGFVIFATFVTLCNA). 5 cysteine pairs are disulfide-bonded: cysteine 22–cysteine 70, cysteine 38–cysteine 62, cysteine 57–cysteine 93, cysteine 60–cysteine 69, and cysteine 84–cysteine 107.

It belongs to the beta-microseminoprotein family. In terms of assembly, homodimer; Interacts with PI16.

The protein localises to the secreted. The sequence is that of Beta-microseminoprotein (MSMB) from Macaca mulatta (Rhesus macaque).